We begin with the raw amino-acid sequence, 63 residues long: Large ribosomal subunit protein uL29 (63 aa).

This sequence belongs to the universal ribosomal protein uL29 family.

The sequence is that of Large ribosomal subunit protein uL29 from Shewanella loihica (strain ATCC BAA-1088 / PV-4).